Consider the following 399-residue polypeptide: Protein shisa-8 (399 aa).

An N-terminal signal peptide occupies residues 1 to 36 (MERAGARGQRCGRRSHGLPLALRLALLLAGSPSGRA). Residues 37-136 (GAPEEQEIAG…APRDPARERS (100 aa)) lie on the Extracellular side of the membrane. The N-linked (GlcNAc...) asparagine glycan is linked to Asn-73. A helical transmembrane segment spans residues 137 to 157 (HTAVYAVCGVAALLVLVGIGA). The Cytoplasmic portion of the chain corresponds to 158–399 (RLGLERAHSP…STNSKAEVTV (242 aa)). Disordered regions lie at residues 207–248 (GDGV…GGSL) and 378–399 (FYSS…EVTV). Polar residues predominate over residues 389-399 (LSTNSKAEVTV).

Belongs to the shisa family. Interacts with AMPAR subunits GRIA1 and GRIA2. In terms of tissue distribution, brain-specific. Highly expressed in cerebellum and olfactory bulb.

It localises to the membrane. Its function is as follows. May regulate trafficking and current kinetics of AMPA-type glutamate receptor (AMPAR) at synapses. The protein is Protein shisa-8 of Mus musculus (Mouse).